The following is a 115-amino-acid chain: Divalent-cation tolerance protein CutA (115 aa).

Cu cation is bound by residues Cys-19, His-86, and His-87.

The protein belongs to the CutA family. In terms of assembly, homotrimer. Cu cation is required as a cofactor.

It is found in the cytoplasm. Involved in resistance toward heavy metals. The polypeptide is Divalent-cation tolerance protein CutA (Citrobacter koseri (strain ATCC BAA-895 / CDC 4225-83 / SGSC4696)).